The primary structure comprises 360 residues: UDP-N-acetylglucosamine--N-acetylmuramyl-(pentapeptide) pyrophosphoryl-undecaprenol N-acetylglucosamine transferase (360 aa).

UDP-N-acetyl-alpha-D-glucosamine-binding residues include Ser198 and Gln289.

It belongs to the glycosyltransferase 28 family. MurG subfamily.

It is found in the cell membrane. The catalysed reaction is Mur2Ac(oyl-L-Ala-gamma-D-Glu-L-Lys-D-Ala-D-Ala)-di-trans,octa-cis-undecaprenyl diphosphate + UDP-N-acetyl-alpha-D-glucosamine = beta-D-GlcNAc-(1-&gt;4)-Mur2Ac(oyl-L-Ala-gamma-D-Glu-L-Lys-D-Ala-D-Ala)-di-trans,octa-cis-undecaprenyl diphosphate + UDP + H(+). It participates in cell wall biogenesis; peptidoglycan biosynthesis. Functionally, cell wall formation. Catalyzes the transfer of a GlcNAc subunit on undecaprenyl-pyrophosphoryl-MurNAc-pentapeptide (lipid intermediate I) to form undecaprenyl-pyrophosphoryl-MurNAc-(pentapeptide)GlcNAc (lipid intermediate II). The polypeptide is UDP-N-acetylglucosamine--N-acetylmuramyl-(pentapeptide) pyrophosphoryl-undecaprenol N-acetylglucosamine transferase (Streptococcus pyogenes serotype M4 (strain MGAS10750)).